We begin with the raw amino-acid sequence, 290 residues long: 33 kDa chaperonin (290 aa).

2 cysteine pairs are disulfide-bonded: Cys231–Cys233 and Cys263–Cys266.

This sequence belongs to the HSP33 family. Post-translationally, under oxidizing conditions two disulfide bonds are formed involving the reactive cysteines. Under reducing conditions zinc is bound to the reactive cysteines and the protein is inactive.

It is found in the cytoplasm. Redox regulated molecular chaperone. Protects both thermally unfolding and oxidatively damaged proteins from irreversible aggregation. Plays an important role in the bacterial defense system toward oxidative stress. This is 33 kDa chaperonin from Thermotoga petrophila (strain ATCC BAA-488 / DSM 13995 / JCM 10881 / RKU-1).